The chain runs to 1648 residues: AT-rich interactive domain-containing protein arid-1 (1648 aa).

Disordered stretches follow at residues 150-270 and 284-307; these read ISEA…PVIN and RKLE…EEKL. 3 stretches are compositionally biased toward acidic residues: residues 166–193, 219–228, and 251–260; these read DDDE…DTEE, TQSEESSADS, and SDEEDQEDLA. Residues 261–270 are compositionally biased toward polar residues; sequence TTDSENPVIN. An ARID domain is found at 655-745; that stretch reads AETKDLFVAM…FLESYLAINT (91 aa). Disordered regions lie at residues 763–935, 1095–1563, and 1628–1648; these read VLPG…KEDT, SEKR…KPHD, and KTAS…TPRP. Positions 848-860 are enriched in acidic residues; the sequence is SDDVTDVPDDMTD. 2 stretches are compositionally biased toward basic and acidic residues: residues 861–878 and 925–935; these read HEDL…ERKS and SEGRGPRKEDT. Acidic residues-rich tracts occupy residues 1102–1112 and 1145–1154; these read DDDESSDSDTD and GDEEAEEEVK. Over residues 1165-1185 the composition is skewed to low complexity; it reads QESPPTTSQGTTTPETAATGG. Positions 1195 to 1208 are enriched in pro residues; it reads YPPVPEELVPPPPV. A compositionally biased stretch (polar residues) spans 1213–1251; sequence FPSTDRFSSGGSSNYPTLSRQGSINSMASPMFSPNSDLS. Over residues 1313–1326 the composition is skewed to basic and acidic residues; that stretch reads RASERSIDSASEHH. The segment covering 1348–1357 has biased composition (polar residues); the sequence is ISTTQPTDTS. A compositionally biased stretch (low complexity) spans 1377–1392; it reads ASPTLLTSGPLTLSSS. A compositionally biased stretch (pro residues) spans 1393–1404; sequence APPPPPASPAPP. Low complexity-rich tracts occupy residues 1474–1486 and 1531–1541; these read STTT…PKSI and TPTTMTTSTPT. Positions 1542–1551 are enriched in polar residues; it reads RADSFQTQKN.

Its subcellular location is the nucleus. In terms of biological role, DNA-binding protein which modulates activity of several transcription factors. Plays a role in the modulation of endoplasmic reticulum (ER) homeostasis during chemical and pathogen stress, including exposure to the Gram-negative bacterium P.aeruginosa. This is AT-rich interactive domain-containing protein arid-1 from Caenorhabditis elegans.